Consider the following 154-residue polypeptide: Ribosome maturation factor RimP (154 aa).

The protein belongs to the RimP family.

The protein resides in the cytoplasm. Functionally, required for maturation of 30S ribosomal subunits. The protein is Ribosome maturation factor RimP of Clostridium novyi (strain NT).